Here is a 216-residue protein sequence, read N- to C-terminus: MOB kinase activator 1B (216 aa).

S2 bears the N-acetylserine mark. A phosphothreonine; by STK4/MST1 mark is found at T12 and T35. Zn(2+) contacts are provided by C79, C84, H161, and H166.

Belongs to the MOB1/phocein family. As to quaternary structure, binds STK38L. Interacts with LATS1 and LATS2. In terms of processing, phosphorylated by STK3/MST2 and STK4/MST1 and this phosphorylation enhances its binding to LATS1. In terms of tissue distribution, adrenal gland, bone marrow, brain, lung, placenta, prostate, salivary gland, skeletal muscle, testis, thymus, thyroid gland, uterus, colon with mucosa, fetal brain and fetal liver.

The protein resides in the cytoplasm. It is found in the nucleus. Its function is as follows. Activator of LATS1/2 in the Hippo signaling pathway which plays a pivotal role in organ size control and tumor suppression by restricting proliferation and promoting apoptosis. The core of this pathway is composed of a kinase cascade wherein STK3/MST2 and STK4/MST1, in complex with its regulatory protein SAV1, phosphorylates and activates LATS1/2 in complex with its regulatory protein MOB1, which in turn phosphorylates and inactivates YAP1 oncoprotein and WWTR1/TAZ. Phosphorylation of YAP1 by LATS1/2 inhibits its translocation into the nucleus to regulate cellular genes important for cell proliferation, cell death, and cell migration. Stimulates the kinase activity of STK38L. This chain is MOB kinase activator 1B, found in Homo sapiens (Human).